Consider the following 1580-residue polypeptide: Adhesion G protein-coupled receptor L3 (1580 aa).

The N-terminal stretch at 1–19 (MWPSQLLVFMMLLAPIIHG) is a signal peptide. Over 20–949 (GKHSERHPAL…VHDLLLDVIT (930 aa)) the chain is Extracellular. Positions 23-81 (SERHPALASPLRHAERGPGGALPPRHLLQQPAAERATAHRGPGPRGATRGVRGPGAHGA) are disordered. In terms of domain architecture, SUEL-type lectin spans 103–192 (SCESYPIELR…KYLEVQYECV (90 aa)). 5 cysteine pairs are disulfide-bonded: cysteine 104-cysteine 134, cysteine 113-cysteine 191, cysteine 146-cysteine 178, cysteine 159-cysteine 165, and cysteine 203-cysteine 385. Residue asparagine 161 is glycosylated (N-linked (GlcNAc...) asparagine). The 260-residue stretch at 202–461 (LCPGLLKGVY…VVKYSLDFGP (260 aa)) folds into the Olfactomedin-like domain. The interval 317–347 (YHDTSPYRWGGKSDIDLAVDENGLWVIYATE) is interaction with FLRT3. 4 residues coordinate Ca(2+): aspartate 332, asparagine 380, alanine 381, and valine 435. The disordered stretch occupies residues 494-540 (EISTTGPLGTGSTTTSTTLRTTTWSPGRSTTPSVSGRRNRSTSTPSP). The segment covering 496-521 (STTGPLGTGSTTTSTTLRTTTWSPGR) has biased composition (low complexity). Residues 522-539 (STTPSVSGRRNRSTSTPS) show a composition bias toward polar residues. Asparagine 532, asparagine 617, asparagine 827, asparagine 840, asparagine 885, and asparagine 911 each carry an N-linked (GlcNAc...) asparagine glycan. Residues 756-935 (DIVRENTDNI…AVLMAHVEVK (180 aa)) enclose the GAIN-B domain. 2 disulfide bridges follow: cysteine 886–cysteine 917 and cysteine 905–cysteine 919. Residues 886–935 (CSFWSYSKRTMTGYWSTQGCRLLTTNKTHTTCSCNHLTNFAVLMAHVEVK) are GPS. Positions 923–939 (TNFAVLMAHVEVKHSDA) are stachel. A helical transmembrane segment spans residues 950–970 (WVGILLSLVCLLICIFTFCFF). Topologically, residues 971–978 (RGLQSDRN) are cytoplasmic. Residues 979 to 999 (TIHKNLCISLFVAELLFLIGI) traverse the membrane as a helical segment. Asparagine 1000 carries an N-linked (GlcNAc...) asparagine glycan. Over 1000–1007 (NRTDQPIA) the chain is Extracellular. A helical transmembrane segment spans residues 1008-1028 (CAVFAALLHFFFLAAFTWMFL). The Cytoplasmic segment spans residues 1029–1050 (EGVQLYIMLVEVFESEHSRRKY). Residues 1051–1071 (FYLVGYGMPALIVAVSAAVDY) traverse the membrane as a helical segment. Residues 1072-1088 (RSYGTDKVCWLRLDTYF) are Extracellular-facing. The helical transmembrane segment at 1089–1109 (IWSFIGPATLIIMLNVIFLGI) threads the bilayer. Residues 1110-1142 (ALYKMFHHTAILKPESGCLDNINYEDNRPFIKS) lie on the Cytoplasmic side of the membrane. A helical membrane pass occupies residues 1143-1163 (WVIGAIALLCLLGLTWAFGLM). At 1164–1169 (YINEST) the chain is on the extracellular side. Asparagine 1166 is a glycosylation site (N-linked (GlcNAc...) asparagine). A helical transmembrane segment spans residues 1170–1190 (VIMAYLFTIFNSLQGMFIFIF). Residues 1191–1580 (HCVLQKKVRK…KGPAHLVTSL (390 aa)) lie on the Cytoplasmic side of the membrane. The interval 1213–1238 (GRSTESSIGSGKTSGSRTPGRYSTGS) is disordered. Residue serine 1254 is modified to Phosphoserine. Positions 1555–1580 (FIVPPNKDGTPPEGSSKGPAHLVTSL) are disordered. Positions 1575–1580 (HLVTSL) match the PDZ-binding motif.

This sequence belongs to the G-protein coupled receptor 2 family. LN-TM7 subfamily. In terms of assembly, heterodimer of 2 chains generated by proteolytic processing; the large extracellular N-terminal fragment and the membrane-bound C-terminal fragment predominantly remain associated and non-covalently linked. Interacts (via olfactomedin-like domain) with FLRT1 (via extracellular domain). Interacts (via olfactomedin-like domain) with FLRT2 (via extracellular domain). Interacts (via olfactomedin-like domain) with FLRT3 (via extracellular domain); the interaction is direct. Interacts (via extracellular domain) with TENM1. Interacts (via extracellular domain) with TENM2. Interacts (via extracellular domain) with TENM3. Identified in a complex with FLRT3 and UNC5B; does not interact with UNC5B by itself. Identified in a complex with FLRT3 and UNC5D; does not interact with UNC5D by itself. Interacts (via PDZ-binding motif) with SHANK3. Interacts (via PDZ-binding motif) with DLG4. In terms of processing, autoproteolytically processed at the GPS region of the GAIN-B domain; this cleavage modulates receptor activity. Brain-specific distribution but low levels are also detected in lung and spleen.

The protein localises to the cell membrane. It localises to the postsynaptic cell membrane. Its subcellular location is the cell projection. The protein resides in the axon. It is found in the cell junction. With respect to regulation, forms a heterodimer of 2 chains generated by proteolytic processing that remain associated through non-covalent interactions mediated by the GAIN-B domain. In the inactivated receptor, the Stachel sequence (also named stalk) is embedded in the GAIN-B domain, where it adopts a beta-strand conformation. On activation, the Stachel moves into the 7 transmembrane region and adopts a twisted hook-shaped configuration that forms contacts within the receptor, leading to coupling of a G-alpha protein, which activates signaling. The cleaved GAIN-B and N-terminal domains can then dissociate from the rest of the receptor. Functionally, orphan adhesion G-protein coupled receptor (aGPCR), which mediates synapse specificity. Ligand binding causes a conformation change that triggers signaling via guanine nucleotide-binding proteins (G proteins) and modulates the activity of downstream effectors. ADGRL3 is coupled with different classes of G alpha proteins, such as G(12)/G(13), G(s), G(i) or G(q), depending on the context. Coupling to G(12)/G(13) G proteins, which mediates the activation Rho small GTPases is the most efficient. Following G-protein coupled receptor activation, associates with cell adhesion molecules that are expressed at the surface of adjacent cells to direct synapse specificity. Specifically mediates the establishment of Schaffer-collateral synapses formed by CA3-region axons on CA1-region pyramidal neurons in the hippocampus. Localizes to postsynaptic spines in excitatory synapses in the S.oriens and S.radiatum and interacts with presynaptic cell adhesion molecules FLRT3 and TENM2, promoting synapse formation. Plays a role in the development of glutamatergic synapses in the cortex. Important in determining the connectivity rates between the principal neurons in the cortex. Its function is as follows. Orphan adhesion G-protein coupled receptor (aGPCR), which mediates synapse specificity. Ligand binding causes a conformation change that triggers signaling via guanine nucleotide-binding proteins (G proteins) and modulates the activity of downstream effectors, such as adenylate cyclase. Isoform 1 is specifically coupled to G(s) G proteins and mediates activation of adenylate cyclase activity. Following G-protein coupled receptor activation, undergoes liquid-liquid phase transition, associates with (1) cell adhesion molecules that are expressed at the surface of adjacent cells, as well as (2) PDZ-containing proteins, such as SHANK3 and DLG4, in the cytoplasm to direct synapse formation. This Bos taurus (Bovine) protein is Adhesion G protein-coupled receptor L3.